The primary structure comprises 229 residues: Germin-like protein 12-1 (229 aa).

The first 22 residues, Met1–Ala22, serve as a signal peptide directing secretion. Cys32 and Cys47 are disulfide-bonded. The Cupin type-1 domain maps to Ala62–Asp217. A glycan (N-linked (GlcNAc...) asparagine) is linked at Asn78. Mn(2+)-binding residues include His111, His113, Glu118, and His162.

It belongs to the germin family. In terms of assembly, oligomer (believed to be a pentamer but probably hexamer).

The protein localises to the secreted. It is found in the extracellular space. It localises to the apoplast. Functionally, may play a role in plant defense. Probably has no oxalate oxidase activity even if the active site is conserved. This Oryza sativa subsp. japonica (Rice) protein is Germin-like protein 12-1.